A 192-amino-acid chain; its full sequence is UPF0301 protein Bcep18194_A3962 (192 aa).

This sequence belongs to the UPF0301 (AlgH) family.

The chain is UPF0301 protein Bcep18194_A3962 from Burkholderia lata (strain ATCC 17760 / DSM 23089 / LMG 22485 / NCIMB 9086 / R18194 / 383).